A 478-amino-acid chain; its full sequence is H(+)/Cl(-) exchange transporter ClcA (478 aa).

Residues 1–32 are Cytoplasmic-facing; it reads MTHSTQQLSPEGVAEGKRGRLIRELVNRDKTP. Residues 33–69 traverse the membrane as a helical segment; sequence LIILIMAAVVGVVTGLLGVAFDRGVDWVQQQRLLALA. Residues 70-76 are Periplasmic-facing; that stretch reads NVADYAL. A helical membrane pass occupies residues 77-100; it reads LVWPLAFIMSALLAMMGYFLVSRF. Residues 106–110 carry the Selectivity filter part_1 motif; the sequence is GSGIP. Serine 107 provides a ligand contact to chloride. Positions 109-116 form an intramembrane region, helical; sequence IPEIEGAM. The Cytoplasmic portion of the chain corresponds to 117–123; the sequence is EEMRPVR. Helical transmembrane passes span 124–141 and 148–166; these read WWRV…TLGA and EGPM…VDIF. The Selectivity filter part_2 signature appears at 146-150; that stretch reads GREGP. The Cytoplasmic segment spans residues 167-176; that stretch reads RLRSPEARHS. Intramembrane regions (helical) lie at residues 177–189 and 193–201; these read LLAT…LSAA and PLAGILFVI. Residues 202–214 lie on the Cytoplasmic side of the membrane; the sequence is EEMRSQFRYSLVS. The chain crosses the membrane as a helical span at residues 215–232; sequence IKAVFIGVITSTIVYRYF. At 233–252 the chain is on the periplasmic side; that stretch reads NGERAIIEVGKLSDAPLNTL. The chain crosses the membrane as a helical span at residues 253-281; the sequence is WLYLLLGIIFGAVGVIFNALIFRTQDMFV. Residues 282–287 lie on the Cytoplasmic side of the membrane; that stretch reads RFHGGD. Residues 288–309 traverse the membrane as a helical segment; that stretch reads WRKLVLIGGLLGGMCGLLALLH. Over 310–329 the chain is Periplasmic; the sequence is GNAVGGGFALIPIAAAGNFS. Helical transmembrane passes span 330 to 349 and 355 to 376; these read IGML…LCFG and GIFA…LSCA. The Selectivity filter part_3 motif lies at 355–359; sequence GIFAP. 2 residues coordinate chloride: isoleucine 356 and phenylalanine 357. The Periplasmic portion of the chain corresponds to 377–386; the sequence is HFFPQYGIEA. An intramembrane region (helical) is located at residues 387-401; the sequence is GTFAIAGMGALFAAS. The segment at residues 402–404 is an intramembrane region (note=Loop between two helices); sequence VRA. An intramembrane region (helical) is located at residues 405-416; that stretch reads PLTGIVLVLEMT. Residues 417-421 constitute an intramembrane region (note=Loop between two helices); it reads DNYQL. The chain crosses the membrane as a helical span at residues 422–438; that stretch reads ILPMIVTCLGATLIAQF. The Cytoplasmic portion of the chain corresponds to 439 to 478; that stretch reads MGGKPLYSAILARTLAKQEQARATVIAQEPAVENTPQIGK. Position 445 (tyrosine 445) interacts with chloride.

It belongs to the chloride channel (TC 2.A.49) family. ClcA subfamily. Homodimer.

It localises to the cell inner membrane. The enzyme catalyses 2 chloride(in) + H(+)(out) = 2 chloride(out) + H(+)(in). Proton-coupled chloride transporter. Functions as antiport system and exchanges two chloride ions for 1 proton. Probably acts as an electrical shunt for an outwardly-directed proton pump that is linked to amino acid decarboxylation, as part of the extreme acid resistance (XAR) response. The chain is H(+)/Cl(-) exchange transporter ClcA from Yersinia pestis bv. Antiqua (strain Antiqua).